A 474-amino-acid chain; its full sequence is Eukaryotic translation initiation factor 3 subunit L (474 aa).

The region spanning 255 to 449 (DAIRMFSHIL…DLDYALQGDL (195 aa)) is the PCI domain.

This sequence belongs to the eIF-3 subunit L family. As to quaternary structure, component of the eukaryotic translation initiation factor 3 (eIF-3) complex.

Its subcellular location is the cytoplasm. Functionally, component of the eukaryotic translation initiation factor 3 (eIF-3) complex, which is involved in protein synthesis of a specialized repertoire of mRNAs and, together with other initiation factors, stimulates binding of mRNA and methionyl-tRNAi to the 40S ribosome. The eIF-3 complex specifically targets and initiates translation of a subset of mRNAs involved in cell proliferation. In Chaetomium globosum (strain ATCC 6205 / CBS 148.51 / DSM 1962 / NBRC 6347 / NRRL 1970) (Soil fungus), this protein is Eukaryotic translation initiation factor 3 subunit L.